The primary structure comprises 192 residues: Fe/S biogenesis protein NfuA (192 aa).

Residues Cys-149 and Cys-152 each coordinate [4Fe-4S] cluster.

It belongs to the NfuA family. In terms of assembly, homodimer. The cofactor is [4Fe-4S] cluster.

Functionally, involved in iron-sulfur cluster biogenesis. Binds a 4Fe-4S cluster, can transfer this cluster to apoproteins, and thereby intervenes in the maturation of Fe/S proteins. Could also act as a scaffold/chaperone for damaged Fe/S proteins. This Alteromonas mediterranea (strain DSM 17117 / CIP 110805 / LMG 28347 / Deep ecotype) protein is Fe/S biogenesis protein NfuA.